The following is a 23-amino-acid chain: Magainin-R1 (23 aa).

As to expression, expressed by the skin glands.

It localises to the secreted. Antimicrobial peptide. The protein is Magainin-R1 of Xenopus ruwenzoriensis (Uganda clawed frog).